We begin with the raw amino-acid sequence, 1663 residues long: Cortactin-binding protein 2 (1663 aa).

Disordered regions lie at residues 1-23, 203-222, 352-440, 454-478, and 498-616; these read MATD…AGAA, KKKT…RSTE, ARPG…LHPG, GNAN…SPTS, and RFTS…PKPS. Positions 119–276 form a coiled coil; it reads KKMQERMSAQ…EQLKRGSDSK (158 aa). The segment covering 384–396 has biased composition (low complexity); that stretch reads NGPSTGSTPDPTS. Residues 411–422 show a composition bias toward polar residues; it reads QTPGIAPQNSQA. Position 498 is an asymmetric dimethylarginine (Arg498). Residues 583 to 593 show a composition bias toward polar residues; that stretch reads TVASPPSSLPQ. ANK repeat units follow at residues 709–739, 743–772, 776–805, 809–838, and 842–871; these read GRPT…DINY, DGHS…QVNA, NGFT…NINH, GGQT…NRSV, and DGWT…LARG. The disordered stretch occupies residues 876 to 897; sequence EEGSESSVFDLDGGEESPEGIS. An ANK 6 repeat occupies 912 to 942; the sequence is EGWTAAHIAASKGFKNCLEILCRHGGLEPER. The interval 1446-1485 is disordered; the sequence is NKKKGESGAWRKVNTSPRRKSGRFSLPTWNKPDLSTEGMK. A Phosphoserine modification is found at Ser1524. Disordered stretches follow at residues 1580–1602 and 1615–1663; these read SQKE…KSKT and VPRS…KPNK. Residues 1582–1599 are compositionally biased toward polar residues; that stretch reads KEVSPLSSHQTTECSNSK. Over residues 1624–1638 the composition is skewed to low complexity; sequence SQNTKRSSSSSNTRQ. Residues 1645–1663 show a composition bias toward basic and acidic residues; sequence SKEENWNLHKNEHLEKPNK.

Interacts with CTTN/cortactin SH3 domain. Interacts with STRN, STRN4/zinedin and MOB4/phocein; this interactions mediate the association with the STRIPAK core complex and may regulate dendritic spine distribution of the STRIPAK complex in hippocampal neurons. Activation of glutamate receptors weakens the interaction with STRN and STRN4.

It localises to the cytoplasm. It is found in the cell cortex. The protein localises to the cell projection. Its subcellular location is the dendritic spine. In terms of biological role, regulates the dendritic spine distribution of CTTN/cortactin in hippocampal neurons, and thus controls dendritic spinogenesis and dendritic spine maintenance. Associates with the striatin-interacting phosphatase and kinase (STRIPAK) core complex to regulate dendritic spine distribution of the STRIPAK complex in hippocampal neurons. The protein is Cortactin-binding protein 2 (CTTNBP2) of Nomascus leucogenys (Northern white-cheeked gibbon).